We begin with the raw amino-acid sequence, 185 residues long: Hypoxanthine/guanine phosphoribosyltransferase (185 aa).

Belongs to the purine/pyrimidine phosphoribosyltransferase family. Archaeal HPRT subfamily. Homodimer.

Its subcellular location is the cytoplasm. The catalysed reaction is IMP + diphosphate = hypoxanthine + 5-phospho-alpha-D-ribose 1-diphosphate. It catalyses the reaction GMP + diphosphate = guanine + 5-phospho-alpha-D-ribose 1-diphosphate. It participates in purine metabolism; IMP biosynthesis via salvage pathway; IMP from hypoxanthine: step 1/1. Catalyzes a salvage reaction resulting in the formation of IMP that is energically less costly than de novo synthesis. The polypeptide is Hypoxanthine/guanine phosphoribosyltransferase (Methanococcus maripaludis (strain C7 / ATCC BAA-1331)).